The sequence spans 314 residues: 4-hydroxy-3-methylbut-2-enyl diphosphate reductase (314 aa).

Cys12 is a binding site for [4Fe-4S] cluster. The (2E)-4-hydroxy-3-methylbut-2-enyl diphosphate site is built by His41 and His74. Dimethylallyl diphosphate-binding residues include His41 and His74. Positions 41 and 74 each coordinate isopentenyl diphosphate. Cys96 contacts [4Fe-4S] cluster. (2E)-4-hydroxy-3-methylbut-2-enyl diphosphate is bound at residue His124. His124 lines the dimethylallyl diphosphate pocket. An isopentenyl diphosphate-binding site is contributed by His124. Catalysis depends on Glu126, which acts as the Proton donor. Thr167 contributes to the (2E)-4-hydroxy-3-methylbut-2-enyl diphosphate binding site. Residue Cys197 participates in [4Fe-4S] cluster binding. Residues Ser225, Ser226, Asn227, and Ser269 each contribute to the (2E)-4-hydroxy-3-methylbut-2-enyl diphosphate site. Dimethylallyl diphosphate-binding residues include Ser225, Ser226, Asn227, and Ser269. 4 residues coordinate isopentenyl diphosphate: Ser225, Ser226, Asn227, and Ser269.

Belongs to the IspH family. The cofactor is [4Fe-4S] cluster.

It catalyses the reaction isopentenyl diphosphate + 2 oxidized [2Fe-2S]-[ferredoxin] + H2O = (2E)-4-hydroxy-3-methylbut-2-enyl diphosphate + 2 reduced [2Fe-2S]-[ferredoxin] + 2 H(+). The enzyme catalyses dimethylallyl diphosphate + 2 oxidized [2Fe-2S]-[ferredoxin] + H2O = (2E)-4-hydroxy-3-methylbut-2-enyl diphosphate + 2 reduced [2Fe-2S]-[ferredoxin] + 2 H(+). It functions in the pathway isoprenoid biosynthesis; dimethylallyl diphosphate biosynthesis; dimethylallyl diphosphate from (2E)-4-hydroxy-3-methylbutenyl diphosphate: step 1/1. The protein operates within isoprenoid biosynthesis; isopentenyl diphosphate biosynthesis via DXP pathway; isopentenyl diphosphate from 1-deoxy-D-xylulose 5-phosphate: step 6/6. Catalyzes the conversion of 1-hydroxy-2-methyl-2-(E)-butenyl 4-diphosphate (HMBPP) into a mixture of isopentenyl diphosphate (IPP) and dimethylallyl diphosphate (DMAPP). Acts in the terminal step of the DOXP/MEP pathway for isoprenoid precursor biosynthesis. The protein is 4-hydroxy-3-methylbut-2-enyl diphosphate reductase of Aliivibrio fischeri (strain ATCC 700601 / ES114) (Vibrio fischeri).